A 173-amino-acid polypeptide reads, in one-letter code: UPF0398 protein SMU_470 (173 aa).

This sequence belongs to the UPF0398 family.

In Streptococcus mutans serotype c (strain ATCC 700610 / UA159), this protein is UPF0398 protein SMU_470.